Reading from the N-terminus, the 293-residue chain is Glutamyl-Q tRNA(Asp) synthetase (293 aa).

L-glutamate is bound by residues 26–30 and aspartate 62; that span reads RFAPS. Residues 29 to 39 carry the 'HIGH' region motif; sequence PSPTGLLHLGN. Residues cysteine 118, cysteine 120, tyrosine 131, and cysteine 135 each coordinate Zn(2+). Positions 178 and 196 each coordinate L-glutamate. The short motif at 234–238 is the 'KMSKS' region element; it reads KLSKR. Residue lysine 237 participates in ATP binding.

This sequence belongs to the class-I aminoacyl-tRNA synthetase family. GluQ subfamily. The cofactor is Zn(2+).

Its function is as follows. Catalyzes the tRNA-independent activation of glutamate in presence of ATP and the subsequent transfer of glutamate onto a tRNA(Asp). Glutamate is transferred on the 2-amino-5-(4,5-dihydroxy-2-cyclopenten-1-yl) moiety of the queuosine in the wobble position of the QUC anticodon. The chain is Glutamyl-Q tRNA(Asp) synthetase from Synechococcus sp. (strain CC9605).